Here is a 188-residue protein sequence, read N- to C-terminus: UPF0301 protein Cag_1601 (188 aa).

It belongs to the UPF0301 (AlgH) family.

This chain is UPF0301 protein Cag_1601, found in Chlorobium chlorochromatii (strain CaD3).